Reading from the N-terminus, the 331-residue chain is NAD-dependent protein deacetylase HST2 (331 aa).

A Deacetylase sirtuin-type domain is found at 1–262 (MPSLDDILKP…EKLCTLLGLD (262 aa)). NAD(+)-binding positions include 26–46 (GAGI…TGLY) and 109–112 (QNID). His129 acts as the Proton acceptor in catalysis. The Zn(2+) site is built by Cys137, Cys140, Cys161, and Cys164. NAD(+) is bound by residues 201–203 (GTS), 226–228 (NKE), and Cys248. A coiled-coil region spans residues 276–331 (YSKAETKETKMHEIEDKLKEEAHLKEDKHTTKVDKKEKQNDANDKELEQLIDKLKI). A disordered region spans residues 283 to 319 (ETKMHEIEDKLKEEAHLKEDKHTTKVDKKEKQNDAND).

It belongs to the sirtuin family. Class I subfamily. Requires Zn(2+) as cofactor.

It is found in the cytoplasm. It localises to the nucleus. It carries out the reaction N(6)-acetyl-L-lysyl-[protein] + NAD(+) + H2O = 2''-O-acetyl-ADP-D-ribose + nicotinamide + L-lysyl-[protein]. NAD-dependent histone deacetylase that is involved in nuclear silencing events. Derepresses subtelomeric silencing and increases repression in nucleolar (rDNA) silencing. Its function is negatively regulated by active nuclear export. This Candida albicans (strain SC5314 / ATCC MYA-2876) (Yeast) protein is NAD-dependent protein deacetylase HST2 (HST2).